A 343-amino-acid chain; its full sequence is N-acetyl-gamma-glutamyl-phosphate reductase (343 aa).

Cys147 is a catalytic residue.

This sequence belongs to the NAGSA dehydrogenase family. Type 1 subfamily.

It localises to the cytoplasm. It catalyses the reaction N-acetyl-L-glutamate 5-semialdehyde + phosphate + NADP(+) = N-acetyl-L-glutamyl 5-phosphate + NADPH + H(+). It functions in the pathway amino-acid biosynthesis; L-arginine biosynthesis; N(2)-acetyl-L-ornithine from L-glutamate: step 3/4. In terms of biological role, catalyzes the NADPH-dependent reduction of N-acetyl-5-glutamyl phosphate to yield N-acetyl-L-glutamate 5-semialdehyde. This is N-acetyl-gamma-glutamyl-phosphate reductase from Staphylococcus aureus (strain MRSA252).